The primary structure comprises 353 residues: tRNA-splicing endonuclease (353 aa).

Residues Tyr-289, His-300, and Lys-331 contribute to the active site.

Belongs to the tRNA-intron endonuclease family. Archaeal long subfamily. In terms of assembly, homodimer.

The enzyme catalyses pretRNA = a 3'-half-tRNA molecule with a 5'-OH end + a 5'-half-tRNA molecule with a 2',3'-cyclic phosphate end + an intron with a 2',3'-cyclic phosphate and a 5'-hydroxyl terminus.. Its function is as follows. Endonuclease that removes tRNA introns. Cleaves pre-tRNA at the 5'- and 3'-splice sites to release the intron. The products are an intron and two tRNA half-molecules bearing 2',3' cyclic phosphate and 5'-OH termini. Recognizes a pseudosymmetric substrate in which 2 bulged loops of 3 bases are separated by a stem of 4 bp. This chain is tRNA-splicing endonuclease, found in Methanosarcina mazei (strain ATCC BAA-159 / DSM 3647 / Goe1 / Go1 / JCM 11833 / OCM 88) (Methanosarcina frisia).